The primary structure comprises 563 residues: Mitochondrial distribution and morphology protein 34 (563 aa).

Residues 1–195 enclose the SMP-LTD domain; it reads MAFNFNWSPL…LPAIIHRLSL (195 aa). Disordered stretches follow at residues 298–460 and 535–563; these read ERGD…QIPT and RHDK…PKAL. 2 stretches are compositionally biased toward polar residues: residues 303–332 and 346–357; these read AGTT…FSNR and SLVNMNSATTGL. A compositionally biased stretch (basic residues) spans 365 to 383; that stretch reads SRSHTTRKKKNRVVNLRKS. 2 stretches are compositionally biased toward polar residues: residues 386 to 402 and 444 to 460; these read TDNV…SITA and PSRS…QIPT.

This sequence belongs to the MDM34 family. Component of the ER-mitochondria encounter structure (ERMES) or MDM complex, composed of mmm1, mdm10, mdm12 and mdm34.

It is found in the mitochondrion outer membrane. In terms of biological role, component of the ERMES/MDM complex, which serves as a molecular tether to connect the endoplasmic reticulum (ER) and mitochondria. Components of this complex are involved in the control of mitochondrial shape and protein biogenesis, and function in nonvesicular lipid trafficking between the ER and mitochondria. Mdm34 is required for the interaction of the ER-resident membrane protein mmm1 and the outer mitochondrial membrane-resident beta-barrel protein mdm10. The protein is Mitochondrial distribution and morphology protein 34 of Sclerotinia sclerotiorum (strain ATCC 18683 / 1980 / Ss-1) (White mold).